Consider the following 506-residue polypeptide: MMITLTGHTLTVEEMKRLLLEGEGVTACPTSMQKVAECREVVEKIVEDGKVVYGITTGFGKFSDVLIQKDDVKALQHNLIQSHACGIGDPFPEEVSRGMLILRANTMLKGVSGVRPLVVNMLLEFVNRKIHPVVPQQGSLGASGDLAPLSHLALVLLGEGEVFYKGKRVHAMVALTEEGLEPIELEAKEGLALINGTQAMTAQGVLSYIEAEATAYQAELIASMTIEGLQGIIDAFDENVHKARGYKEQVDVASRIRDILHDSKLTTKQGELRVQDAYSLRCIPQVHGASWQVLNYVKEKLEIEMNAATDNPLIFDGGEKVISGGNFHGQPIAFAMDFLKVGMAELANISERRIERLVNPQLNDLPPFLSPEPGLQSGAMIMQYAAASLVSENKTLAHPASVDSIPSSANQEDHVSMGTIASRHAHQIIQNVRRVLSIEMICAMQAAEYRGIENMSTVTKSFYHQGRQQVPSIKNDRIFSTDIENIAHWLKTNYSIKERLDVNAAL.

Residues 142–144 (ASG) constitute a cross-link (5-imidazolinone (Ala-Gly)). Ser143 is modified (2,3-didehydroalanine (Ser)).

Belongs to the PAL/histidase family. In terms of processing, contains an active site 4-methylidene-imidazol-5-one (MIO), which is formed autocatalytically by cyclization and dehydration of residues Ala-Ser-Gly.

It localises to the cytoplasm. It carries out the reaction L-histidine = trans-urocanate + NH4(+). The protein operates within amino-acid degradation; L-histidine degradation into L-glutamate; N-formimidoyl-L-glutamate from L-histidine: step 1/3. In Bacillus cereus (strain B4264), this protein is Histidine ammonia-lyase.